A 124-amino-acid polypeptide reads, in one-letter code: Small ribosomal subunit protein uS12 (124 aa).

The disordered stretch occupies residues 1–28 (MPTISQLVGSERKRLTKKTKSPALKSCP). The residue at position 89 (aspartate 89) is a 3-methylthioaspartic acid. Residues 104 to 124 (TAGVKDRRQSRSKYGAKAPKD) form a disordered region.

This sequence belongs to the universal ribosomal protein uS12 family. As to quaternary structure, part of the 30S ribosomal subunit. Contacts proteins S8 and S17. May interact with IF1 in the 30S initiation complex.

Its function is as follows. With S4 and S5 plays an important role in translational accuracy. Functionally, interacts with and stabilizes bases of the 16S rRNA that are involved in tRNA selection in the A site and with the mRNA backbone. Located at the interface of the 30S and 50S subunits, it traverses the body of the 30S subunit contacting proteins on the other side and probably holding the rRNA structure together. The combined cluster of proteins S8, S12 and S17 appears to hold together the shoulder and platform of the 30S subunit. The polypeptide is Small ribosomal subunit protein uS12 (Prochlorococcus marinus (strain MIT 9301)).